The following is a 421-amino-acid chain: 3-phosphoshikimate 1-carboxyvinyltransferase (421 aa).

3-phosphoshikimate-binding residues include K19, S20, and R24. K19 contacts phosphoenolpyruvate. Phosphoenolpyruvate is bound by residues G88 and R116. 3-phosphoshikimate-binding residues include S160, Q162, D307, and K334. Q162 is a binding site for phosphoenolpyruvate. The Proton acceptor role is filled by D307. Positions 338 and 380 each coordinate phosphoenolpyruvate.

Belongs to the EPSP synthase family. Monomer.

It is found in the cytoplasm. It carries out the reaction 3-phosphoshikimate + phosphoenolpyruvate = 5-O-(1-carboxyvinyl)-3-phosphoshikimate + phosphate. Its pathway is metabolic intermediate biosynthesis; chorismate biosynthesis; chorismate from D-erythrose 4-phosphate and phosphoenolpyruvate: step 6/7. In terms of biological role, catalyzes the transfer of the enolpyruvyl moiety of phosphoenolpyruvate (PEP) to the 5-hydroxyl of shikimate-3-phosphate (S3P) to produce enolpyruvyl shikimate-3-phosphate and inorganic phosphate. The sequence is that of 3-phosphoshikimate 1-carboxyvinyltransferase from Thermotoga neapolitana (strain ATCC 49049 / DSM 4359 / NBRC 107923 / NS-E).